The chain runs to 398 residues: MTQQLHSYFGEFGGMYVPQILIPALIQLEKEFIEAMKDISFQTTFKNLLHHYAGRPTPLTLCQNLTSGTCSKLYLKREDLLHGGSHKTNQVLGQALLAKRMHKKEIIAETGAGQHGVAVSIASSLLKLKCRIYMGYKDMKRQELNVLRMKLMGTQVIPVHHGSATLKDACNEAIREWSSTYKHTHYMIGTVAGPHPFPTIVKEFQRIIGSETYNQIQTHEKKLPDAVIACIGGGSNAIGIFSGFIDIPSVQLLGVEAGGLGLHTEYHGSSLQCGETGIYFGMKSPILQSQEGQIKNSYSIAAGLDFPSVGPEHAYLKKINRVKYVSINDEEAINAFQELSLYEGIIPALESAHALAHALKIIRKTPKKKQILIVNLSGRGDKDIITVNNALLNKEICK.

Lys-87 carries the post-translational modification N6-(pyridoxal phosphate)lysine.

This sequence belongs to the TrpB family. As to quaternary structure, tetramer of two alpha and two beta chains. Requires pyridoxal 5'-phosphate as cofactor.

It catalyses the reaction (1S,2R)-1-C-(indol-3-yl)glycerol 3-phosphate + L-serine = D-glyceraldehyde 3-phosphate + L-tryptophan + H2O. The protein operates within amino-acid biosynthesis; L-tryptophan biosynthesis; L-tryptophan from chorismate: step 5/5. In terms of biological role, the beta subunit is responsible for the synthesis of L-tryptophan from indole and L-serine. The sequence is that of Tryptophan synthase beta chain from Blochmanniella floridana.